Reading from the N-terminus, the 155-residue chain is Small ribosomal subunit protein uS7c (155 aa).

The protein belongs to the universal ribosomal protein uS7 family. As to quaternary structure, part of the 30S ribosomal subunit.

It localises to the plastid. The protein resides in the chloroplast. In terms of biological role, one of the primary rRNA binding proteins, it binds directly to 16S rRNA where it nucleates assembly of the head domain of the 30S subunit. This chain is Small ribosomal subunit protein uS7c (rps7), found in Hydrastis canadensis (Goldenseal).